The primary structure comprises 402 residues: Deoxyguanosinetriphosphate triphosphohydrolase-like protein (402 aa).

The 149-residue stretch at Arg-69–Asp-217 folds into the HD domain.

It belongs to the dGTPase family. Type 2 subfamily.

The chain is Deoxyguanosinetriphosphate triphosphohydrolase-like protein from Bradyrhizobium diazoefficiens (strain JCM 10833 / BCRC 13528 / IAM 13628 / NBRC 14792 / USDA 110).